The sequence spans 626 residues: Mini-chromosome maintenance complex-binding protein (626 aa).

Disordered regions lie at residues 152 to 216 (STSY…LDLN) and 265 to 287 (PSSL…AHDP). Residues 177-196 (KQREPHTEPHGNGDSKRQET) are compositionally biased toward basic and acidic residues. Over residues 197–210 (EAPSSQTTAPSDCS) the composition is skewed to polar residues.

It belongs to the MCMBP family. In terms of assembly, interacts with the mcm complex: associates with the mcm3-7 complex which lacks mcm2, while it does not interact with the mcm complex when mcm2 is present (mcm2-7 complex).

Its subcellular location is the nucleus. Functionally, associated component of the mcm complex that acts as a regulator of DNA replication. Binds to the MCM complex during late S phase and promotes the disassembly of the mcm complex from chromatin, thereby acting as a key regulator of pre-replication complex (pre-RC) unloading from replicated DNA. Can dissociate the mcm complex without addition of ATP; probably acts by destabilizing interactions of each individual subunits of the mcm complex. Required for sister chromatid cohesion. The protein is Mini-chromosome maintenance complex-binding protein (mcmbp) of Salmo salar (Atlantic salmon).